The primary structure comprises 591 residues: Probable translation initiation factor IF-2 (591 aa).

The tr-type G domain maps to 7 to 223 (LRTPIVCVMG…LLGLAQKFLE (217 aa)). The interval 16-23 (GHVDHGKT) is G1. A GTP-binding site is contributed by 16–23 (GHVDHGKT). A G2 region spans residues 41–45 (AITQH). Residues 78–81 (DTPG) are G3. Residues 78–82 (DTPGH) and 132–135 (NKID) contribute to the GTP site. Residues 132 to 135 (NKID) form a G4 region. The tract at residues 200-202 (SAF) is G5.

The protein belongs to the TRAFAC class translation factor GTPase superfamily. Classic translation factor GTPase family. IF-2 subfamily.

Functionally, function in general translation initiation by promoting the binding of the formylmethionine-tRNA to ribosomes. Seems to function along with eIF-2. The protein is Probable translation initiation factor IF-2 of Methanosarcina mazei (strain ATCC BAA-159 / DSM 3647 / Goe1 / Go1 / JCM 11833 / OCM 88) (Methanosarcina frisia).